The primary structure comprises 89 residues: Large ribosomal subunit protein eL34 (89 aa).

The interval 1 to 22 is disordered; sequence MPAPRYKSGSSKKVYRKAPGNS.

The protein belongs to the eukaryotic ribosomal protein eL34 family.

In Methanococcus maripaludis (strain C5 / ATCC BAA-1333), this protein is Large ribosomal subunit protein eL34.